Here is a 270-residue protein sequence, read N- to C-terminus: MKVTIAHNNYDKTLETVAYLKKLLQKKNVIFDAKYPDIVITVGGDGTLINAFHRYENQVDSVRFIGVHTGHLGFYTDWRNYDIDKMVDALLLTKGQPAKYPLLEIKMLTESGDTRYHLAVNESAVKRISHTLEADVYIDDELFENFRGDGLCVSTPTGSTAYSKSLGGAVIHPRLKALQMTEIASINNRVFRTLSAPIVIAPDQWITIVPNVDHFVMTVDGARIDVRNAKKIEYRISKHSIQFDQFGHHHFWSRVQNAFIKDTEDNDKFI.

The active-site Proton acceptor is aspartate 45. Residues 45–46 (DG), 121–122 (NE), arginine 147, aspartate 149, 160–165 (TAYSKS), and alanine 184 contribute to the NAD(+) site.

The protein belongs to the NAD kinase family. Requires a divalent metal cation as cofactor.

Its subcellular location is the cytoplasm. It catalyses the reaction NAD(+) + ATP = ADP + NADP(+) + H(+). In terms of biological role, involved in the regulation of the intracellular balance of NAD and NADP, and is a key enzyme in the biosynthesis of NADP. Catalyzes specifically the phosphorylation on 2'-hydroxyl of the adenosine moiety of NAD to yield NADP. This Lactobacillus helveticus (strain DPC 4571) protein is NAD kinase.